Here is an 89-residue protein sequence, read N- to C-terminus: UPF0297 protein SMU_2079c (89 aa).

Belongs to the UPF0297 family.

This is UPF0297 protein SMU_2079c from Streptococcus mutans serotype c (strain ATCC 700610 / UA159).